A 723-amino-acid chain; its full sequence is Aminodeoxychorismate synthase (723 aa).

In terms of domain architecture, Glutamine amidotransferase type-1 spans 2-195 (RTLLVDNYDS…RDLTERHGRT (194 aa)). Cys-82 functions as the Nucleophile in the catalytic mechanism. A disordered region spans residues 96-117 (VGRAPEPRHGRTSAVRHDGTGL). Residues 98 to 114 (RAPEPRHGRTSAVRHDG) show a composition bias toward basic and acidic residues. Catalysis depends on residues His-169 and Glu-171. 2 disordered regions span residues 192-219 (HGRT…KATT) and 693-723 (FPGR…VLPG). Positions 255 to 723 (LDSSRPGGEL…GAPKDLVLPG (469 aa)) are PABB component. The segment covering 695–704 (GRERPGKDLD) has biased composition (basic and acidic residues).

The protein in the C-terminal section; belongs to the anthranilate synthase component I family.

The catalysed reaction is chorismate + L-glutamine = 4-amino-4-deoxychorismate + L-glutamate. The protein operates within antibiotic biosynthesis; candicidin biosynthesis. Its function is as follows. Involved in candicidin biosynthesis. Catalyzes the biosynthesis of 4-amino-4-deoxychorismate (ADC) from chorismate and glutamine. The chain is Aminodeoxychorismate synthase from Streptomyces griseus.